Here is a 403-residue protein sequence, read N- to C-terminus: Methylthioribose-1-phosphate isomerase (403 aa).

Aspartate 280 serves as the catalytic Proton donor.

This sequence belongs to the eIF-2B alpha/beta/delta subunits family. MtnA subfamily.

Its subcellular location is the cytoplasm. It is found in the nucleus. The enzyme catalyses 5-(methylsulfanyl)-alpha-D-ribose 1-phosphate = 5-(methylsulfanyl)-D-ribulose 1-phosphate. The protein operates within amino-acid biosynthesis; L-methionine biosynthesis via salvage pathway; L-methionine from S-methyl-5-thio-alpha-D-ribose 1-phosphate: step 1/6. In terms of biological role, catalyzes the interconversion of methylthioribose-1-phosphate (MTR-1-P) into methylthioribulose-1-phosphate (MTRu-1-P). The protein is Methylthioribose-1-phosphate isomerase of Eremothecium gossypii (strain ATCC 10895 / CBS 109.51 / FGSC 9923 / NRRL Y-1056) (Yeast).